A 441-amino-acid chain; its full sequence is Serine/threonine-protein kinase prk-2 (441 aa).

Residues 31-285 (YKLKAELGRG…LEAILNHPWV (255 aa)) enclose the Protein kinase domain. ATP contacts are provided by residues 37-45 (LGRGGFGVV) and lysine 60. Aspartate 158 functions as the Proton acceptor in the catalytic mechanism. A disordered region spans residues 301-364 (QKKTSESSDD…NQKKPNHKEF (64 aa)). The span at 303–320 (KTSESSDDHHSETLGDHS) shows a compositional bias: basic and acidic residues. The span at 328 to 338 (PPTSSVSQQPG) shows a compositional bias: polar residues.

This sequence belongs to the protein kinase superfamily. Ser/Thr protein kinase family. PIM subfamily. Mg(2+) serves as cofactor.

The enzyme catalyses L-seryl-[protein] + ATP = O-phospho-L-seryl-[protein] + ADP + H(+). It catalyses the reaction L-threonyl-[protein] + ATP = O-phospho-L-threonyl-[protein] + ADP + H(+). Its function is as follows. Involved in the negative regulation of synaptic differentiation in PLM neurons. This is Serine/threonine-protein kinase prk-2 from Caenorhabditis elegans.